The chain runs to 439 residues: Enolase (439 aa).

A (2R)-2-phosphoglycerate-binding site is contributed by glutamine 163. The active-site Proton donor is the glutamate 205. Residues aspartate 242, glutamate 287, and aspartate 314 each coordinate Mg(2+). (2R)-2-phosphoglycerate is bound by residues lysine 339, arginine 368, serine 369, and lysine 390. The active-site Proton acceptor is the lysine 339.

It belongs to the enolase family. Mg(2+) serves as cofactor.

Its subcellular location is the cytoplasm. It is found in the secreted. It localises to the cell surface. The catalysed reaction is (2R)-2-phosphoglycerate = phosphoenolpyruvate + H2O. Its pathway is carbohydrate degradation; glycolysis; pyruvate from D-glyceraldehyde 3-phosphate: step 4/5. Its function is as follows. Catalyzes the reversible conversion of 2-phosphoglycerate (2-PG) into phosphoenolpyruvate (PEP). It is essential for the degradation of carbohydrates via glycolysis. The protein is Enolase of Levilactobacillus brevis (strain ATCC 367 / BCRC 12310 / CIP 105137 / JCM 1170 / LMG 11437 / NCIMB 947 / NCTC 947) (Lactobacillus brevis).